The sequence spans 47 residues: Putative protein PinH (47 aa).

Residues 1-47 (MWHLVVLLEELCERGINFRALAQSIFAQQWGDECCKSKTICDLKVIV) enclose the Resolvase/invertase-type recombinase catalytic domain.

This sequence belongs to the site-specific recombinase resolvase family.

The sequence is that of Putative protein PinH (pinH) from Escherichia coli (strain K12).